A 230-amino-acid polypeptide reads, in one-letter code: MDLKYLNQKEAIAVDQELFNEYKFSVDQLMELAGLSCAHAVAKCFPAEKHPRILVCCGPGNNGGDGLVAARHLALMGYTPTIYYPKPTAKPLFENLSHQCQQMDICDVKECPSVESAARDYDLILDALFGFSFKPPVRADFVAVVELMQQTKLPIASVDIPSGWDVEKGKLTECDVEPALLISLTAPKLCARQFRGEHHYLGGRFVPPALQRKYELNLPVYPGNELCVKL.

One can recognise a YjeF N-terminal domain in the interval 11 to 218 (AIAVDQELFN…ALQRKYELNL (208 aa)). Residue 61-65 (NNGGD) coordinates (6S)-NADPHX. Positions 62 and 126 each coordinate K(+). Residues 130-136 (GFSFKPP) and Asp159 each bind (6S)-NADPHX. Position 162 (Ser162) interacts with K(+).

The protein belongs to the NnrE/AIBP family. K(+) is required as a cofactor.

It carries out the reaction (6R)-NADHX = (6S)-NADHX. The catalysed reaction is (6R)-NADPHX = (6S)-NADPHX. Catalyzes the epimerization of the S- and R-forms of NAD(P)HX, a damaged form of NAD(P)H that is a result of enzymatic or heat-dependent hydration. This is a prerequisite for the S-specific NAD(P)H-hydrate dehydratase to allow the repair of both epimers of NAD(P)HX. This chain is NAD(P)H-hydrate epimerase, found in Drosophila sechellia (Fruit fly).